A 312-amino-acid chain; its full sequence is Olfactory receptor-like protein COR6 (312 aa).

The Extracellular portion of the chain corresponds to 1–26 (MASGNCTTPTTFILSGLTDNPGLQMP). N5 carries N-linked (GlcNAc...) asparagine glycosylation. The helical transmembrane segment at 27–49 (LFMVFLAIYTITLLTNLGLIALI) threads the bilayer. Over 50–57 (SIDLQLQT) the chain is Cytoplasmic. The chain crosses the membrane as a helical span at residues 58 to 79 (PMYIFLQNLSFTDAVYSTVITP). The Extracellular segment spans residues 80–100 (KMLATFLEETKTISYVGCILQ). Cysteines 97 and 179 form a disulfide. Residues 101–120 (YFSFVLLTVRECLLLAVMAY) traverse the membrane as a helical segment. Over 121–139 (DRYAAICKPLLYPAIMTKA) the chain is Cytoplasmic. The chain crosses the membrane as a helical span at residues 140-164 (VCWRLVKGLYSLAFLNFLVHTSGLL). The Extracellular segment spans residues 165–205 (KLSFCSSNVVNHFFCDNSPLFQISSSSTALNELLVFIFGSL). The helical transmembrane segment at 206–226 (FVMSSIITILISYVFIILTVV) threads the bilayer. Residues 227 to 239 (RIRSKERKYKAFS) lie on the Cytoplasmic side of the membrane. Residues 240–260 (TCTSHLMAVSLFHGTIVFMYF) traverse the membrane as a helical segment. The Extracellular segment spans residues 261–271 (QPANNFSLDKD). A helical membrane pass occupies residues 272-292 (KIMSLFYTVVIPMLNPLIYSW). Residues 293–312 (RNKEVKDALHRAIATAVLFH) lie on the Cytoplasmic side of the membrane.

The protein belongs to the G-protein coupled receptor 1 family.

Its subcellular location is the cell membrane. Functionally, odorant receptor. The sequence is that of Olfactory receptor-like protein COR6 (COR6) from Gallus gallus (Chicken).